The primary structure comprises 121 residues: Large ribosomal subunit protein uL18 (121 aa).

Belongs to the universal ribosomal protein uL18 family. As to quaternary structure, part of the 50S ribosomal subunit; part of the 5S rRNA/L5/L18/L25 subcomplex. Contacts the 5S and 23S rRNAs.

In terms of biological role, this is one of the proteins that bind and probably mediate the attachment of the 5S RNA into the large ribosomal subunit, where it forms part of the central protuberance. The chain is Large ribosomal subunit protein uL18 from Roseiflexus castenholzii (strain DSM 13941 / HLO8).